The primary structure comprises 346 residues: MAQAPDREKALELAMAQIEKSYGKGSVMRLGDEVRQPISIIPTGSIALDVALGIGGLPRGRVIEIYGPESSGKTTVALHAVANAQAAGGVAAFIDAEHALDPEYAKKLGVDTDSLLVSQPDTGEQALEIADMLIRSGALDIVVIDSVAALVPRAELEGEMGDSHVGLQARLMSQALRKMTGALNNSGTTAIFINQLRDKIGVMFGSPETTTGGKALKFYASVRMDVRRIETLKDGTNAVGNRTRVKIVKNKVSPPFKQAEFDILYGRGISREGSLIDMGVDQGFIRKSGAWFTYEGEQLGQGKENARNFLLENGEVANEIEKKIKEKLGIGAVVTDDGVLPAPVDF.

Residue 67-74 (GPESSGKT) participates in ATP binding.

Belongs to the RecA family.

The protein localises to the cytoplasm. Can catalyze the hydrolysis of ATP in the presence of single-stranded DNA, the ATP-dependent uptake of single-stranded DNA by duplex DNA, and the ATP-dependent hybridization of homologous single-stranded DNAs. It interacts with LexA causing its activation and leading to its autocatalytic cleavage. The chain is Protein RecA from Mycobacterium marinum (strain ATCC BAA-535 / M).